The sequence spans 510 residues: Allene oxide synthase 2, chloroplastic (510 aa).

The transit peptide at 1-31 (MALTLSFSLPLPSLHQKIPSKYSTFRPIIVS) directs the protein to the chloroplast. Positions 127, 158, and 162 each coordinate heme b. (13S)-hydroperoxy-(9Z,11E)-octadecadienoate-binding residues include Asn-315 and Lys-321. Asn-315 is a (13S)-hydroperoxy-(9Z,11E,15Z)-octadecatrienoate binding site. Heme b-binding residues include Lys-463 and Cys-465.

This sequence belongs to the cytochrome P450 family. Heme b serves as cofactor. As to expression, expressed in flower buds, leaves, roots, stems, petioles and cotyledons. Not detected in ripe fruits. Expressed in sieve elements.

The protein resides in the plastid. It localises to the chloroplast inner membrane. It carries out the reaction (13S)-hydroperoxy-(9Z,11E,15Z)-octadecatrienoate = (9Z,13S,15Z)-12,13-epoxyoctadeca-9,11,15-trienoate + H2O. The enzyme catalyses (13S)-hydroperoxy-(9Z,11E)-octadecadienoate = (9Z,13S)-12,13-epoxyoctadeca-9,11-dienoate + H2O. In terms of biological role, cytochrome P450 of the CYP74A subfamily involved in the biosynthesis of jasmonic acid from lipoxygenase-derived hydroperoxides of free fatty acids. Catalyzes the synthesis of unstable allene oxide, which is further converted spontaneously by hydrolysis or cyclization. Metabolizes 13- but not 9-hydroperoxides of linoleic and linolenic acids. Can use 15S-hydroperoxy-11(Z),13(E),17(Z)-eicosatrienoic acid (15-HPET) and 13S-hydroperoxy-9(Z),11(E),15(Z)-octadecatrienoic acid (13-HPOT) as substrates, but only 50% activity with 13S-hydroperoxy-9(Z),11(E)-octadecadienoic acid (13-HPOD). The chain is Allene oxide synthase 2, chloroplastic from Solanum lycopersicum (Tomato).